The following is a 129-amino-acid chain: Small ribosomal subunit protein uS9 (129 aa).

Belongs to the universal ribosomal protein uS9 family.

The polypeptide is Small ribosomal subunit protein uS9 (Helicobacter acinonychis (strain Sheeba)).